The following is a 136-amino-acid chain: Alpha-2-purothionin (136 aa).

The first 27 residues, 1–27 (MGSKGLKGVMVCLLILGLVLEQVQVEG), serve as a signal peptide directing secretion. Disulfide bonds link C30/C66, C31/C58, C39/C56, and C43/C52. Residues 73-136 (LALESNSDEP…GDAGLTSLDA (64 aa)) constitute a propeptide, acidic domain.

The protein belongs to the plant thionin (TC 1.C.44) family. 4 C-C subfamily.

The protein localises to the secreted. Thionins are small plant proteins which are toxic to animal cells. They seem to exert their toxic effect at the level of the cell membrane. Their precise function is not known. This Triticum aestivum (Wheat) protein is Alpha-2-purothionin (THI1.2).